The primary structure comprises 165 residues: Shikimate kinase (165 aa).

Residue 12 to 17 (GCGKST) coordinates ATP. Residue Ser-16 participates in Mg(2+) binding. 3 residues coordinate substrate: Asp-34, Arg-57, and Gly-79. Arg-116 contributes to the ATP binding site. Substrate is bound at residue Arg-133.

It belongs to the shikimate kinase family. In terms of assembly, monomer. Mg(2+) serves as cofactor.

It is found in the cytoplasm. It catalyses the reaction shikimate + ATP = 3-phosphoshikimate + ADP + H(+). It participates in metabolic intermediate biosynthesis; chorismate biosynthesis; chorismate from D-erythrose 4-phosphate and phosphoenolpyruvate: step 5/7. Its function is as follows. Catalyzes the specific phosphorylation of the 3-hydroxyl group of shikimic acid using ATP as a cosubstrate. The protein is Shikimate kinase of Clostridium botulinum (strain Eklund 17B / Type B).